A 120-amino-acid chain; its full sequence is C-C motif chemokine 2 (120 aa).

Positions 1-23 are cleaved as a signal peptide; the sequence is MQRSSVLLCLLVIEATFCSLLMA. Gln24 carries the pyrrolidone carboxylic acid modification. 2 disulfide bridges follow: Cys33/Cys57 and Cys34/Cys73. The disordered stretch occupies residues 91 to 120; that stretch reads RTQQKQNSTAPQTSKPLNIRFTTQDPKNRS. A compositionally biased stretch (polar residues) spans 93–120; the sequence is QQKQNSTAPQTSKPLNIRFTTQDPKNRS. A glycan (N-linked (GlcNAc...) asparagine) is linked at Asn97.

This sequence belongs to the intercrine beta (chemokine CC) family. As to quaternary structure, monomer or homodimer; in equilibrium. Is tethered on endothelial cells by glycosaminoglycan (GAG) side chains of proteoglycans. Interacts with TNFAIP6 (via Link domain). In terms of processing, processing at the N-terminus can regulate receptor and target cell selectivity. Deletion of the N-terminal residue converts it from an activator of basophil to an eosinophil chemoattractant. Post-translationally, N-Glycosylated.

Its subcellular location is the secreted. Functionally, acts as a ligand for C-C chemokine receptor CCR2. Signals through binding and activation of CCR2 and induces a strong chemotactic response and mobilization of intracellular calcium ions. Exhibits a chemotactic activity for monocytes and basophils but not neutrophils or eosinophils. Plays an important role in mediating peripheral nerve injury-induced neuropathic pain. Increases NMDA-mediated synaptic transmission in both dopamine D1 and D2 receptor-containing neurons, which may be caused by MAPK/ERK-dependent phosphorylation of GRIN2B/NMDAR2B. This Cavia porcellus (Guinea pig) protein is C-C motif chemokine 2 (CCL2).